The sequence spans 588 residues: DNA ligase (588 aa).

Glu-248 is an ATP binding site. Lys-250 serves as the catalytic N6-AMP-lysine intermediate. The ATP site is built by Arg-255, Arg-270, Glu-300, Phe-341, Arg-418, and Lys-424.

The protein belongs to the ATP-dependent DNA ligase family. Mg(2+) is required as a cofactor.

The enzyme catalyses ATP + (deoxyribonucleotide)n-3'-hydroxyl + 5'-phospho-(deoxyribonucleotide)m = (deoxyribonucleotide)n+m + AMP + diphosphate.. Functionally, DNA ligase that seals nicks in double-stranded DNA during DNA replication, DNA recombination and DNA repair. The polypeptide is DNA ligase (Thermoplasma volcanium (strain ATCC 51530 / DSM 4299 / JCM 9571 / NBRC 15438 / GSS1)).